Consider the following 613-residue polypeptide: Laccase 1 (613 aa).

An N-terminal signal peptide occupies residues 1-20 (MSRFARLLLIVALFFTGAWA). 2 Plastocyanin-like domains span residues 29–142 (ITWK…IRPK) and 171–359 (YLVV…MRIP). Asparagine 74 is a glycosylation site (N-linked (GlcNAc...) asparagine). Cu cation contacts are provided by histidine 78, histidine 80, histidine 122, and histidine 124. Asparagine 256, asparagine 279, asparagine 444, asparagine 468, and asparagine 484 each carry an N-linked (GlcNAc...) asparagine glycan. The region spanning 468–598 (NATRDTENDG…GGMGIAILDG (131 aa)) is the Plastocyanin-like 3 domain. Positions 506, 509, and 511 each coordinate Cu cation. Asparagine 526 is a glycosylation site (N-linked (GlcNAc...) asparagine). Positions 580, 581, 582, and 586 each coordinate Cu cation.

This sequence belongs to the multicopper oxidase family. Cu cation is required as a cofactor.

Its subcellular location is the cell surface. It functions in the pathway pigment biosynthesis. In terms of biological role, laccase; part of the Pks1 gene cluster that mediates the biosynthesis of an anthraquinone derivative pigment that contributes to conidial pigmentation that provides protection from UV radiation, heat and cold stress. The polyketide synthase Pks1 produces 1-acetyl-2,4,6,8-tetrahydroxy-9,10-anthraquinone though condensation of acetyl-CoA with malonyl-CoA. The dehydratase EthD and the laccase Mlac1 further convert the anthraquinone derivative into the final conidial pigment. This Metarhizium guizhouense (strain ARSEF 977) protein is Laccase 1.